Consider the following 803-residue polypeptide: Translation initiation factor IF-2 (803 aa).

Residues 65-75 are compositionally biased toward basic and acidic residues; the sequence is PDKVEEKKEHT. The interval 65–186 is disordered; sequence PDKVEEKKEH…PKSRKSKTLK (122 aa). Residues 175-185 are compositionally biased toward basic residues; sequence NKPKSRKSKTL. In terms of domain architecture, tr-type G spans 300-468; the sequence is IRPPVVTIMG…ILLTADAALE (169 aa). The segment at 309–316 is G1; the sequence is GHVDHGKT. Residue 309–316 coordinates GTP; the sequence is GHVDHGKT. Positions 334–338 are G2; that stretch reads GITQH. Residues 355–358 form a G3 region; that stretch reads DTPG. GTP is bound by residues 355–359 and 409–412; these read DTPGH and NKID. The segment at 409 to 412 is G4; sequence NKID. Residues 445-447 are G5; the sequence is SAK.

It belongs to the TRAFAC class translation factor GTPase superfamily. Classic translation factor GTPase family. IF-2 subfamily.

It localises to the cytoplasm. One of the essential components for the initiation of protein synthesis. Protects formylmethionyl-tRNA from spontaneous hydrolysis and promotes its binding to the 30S ribosomal subunits. Also involved in the hydrolysis of GTP during the formation of the 70S ribosomal complex. This is Translation initiation factor IF-2 from Tropheryma whipplei (strain TW08/27) (Whipple's bacillus).